The sequence spans 465 residues: Trigger factor (465 aa).

The 82-residue stretch at 164–245 folds into the PPIase FKBP-type domain; the sequence is GDFVSIDLSA…VQSVKERELP (82 aa). The segment at 430 to 465 is disordered; it reads GNTVDTAEMFGEPAAEPEQADAAQAGDAEKAAADSE. The segment covering 440-455 has biased composition (low complexity); it reads GEPAAEPEQADAAQAG. The span at 456 to 465 shows a compositional bias: basic and acidic residues; that stretch reads DAEKAAADSE.

It belongs to the FKBP-type PPIase family. Tig subfamily.

Its subcellular location is the cytoplasm. The catalysed reaction is [protein]-peptidylproline (omega=180) = [protein]-peptidylproline (omega=0). Involved in protein export. Acts as a chaperone by maintaining the newly synthesized protein in an open conformation. Functions as a peptidyl-prolyl cis-trans isomerase. In Nocardia farcinica (strain IFM 10152), this protein is Trigger factor.